The chain runs to 34 residues: Subtilosin-A (34 aa).

A cross-link (cyclopeptide (Asn-Gly)) is located at residues 1–34 (NKGCATCSIGIACLVDGPIPDFECAGATGLGLWG). The segment at residues 7 to 28 (CSIGIACLVDGPIPDFECAGAT) is a cross-link (2-cysteinyl-D-allo-threonine (Cys-Thr)). Positions 13-22 (CLVDGPIPDF) form a cross-link, 2-cysteinyl-L-phenylalanine (Cys-Phe).

The protein belongs to the bacteriocin class V family. In terms of processing, alpha-amino of Asn-1 is covalently linked with the carboxyl of Gly-34 to form a cyclopeptide. Thioether cross-links are formed between cysteines and the alpha-carbons of other amino acids, Cys-7 to Thr-28 and Cys-13 to Phe-22. In forming this cross-link, Thr-28 is converted to D-amino acid.

The protein resides in the secreted. Its function is as follows. Has bactericidal activity against some Gram-positive bacteria. This chain is Subtilosin-A, found in Cytobacillus firmus (Bacillus firmus).